The following is a 540-amino-acid chain: Putative cysteine ligase BshC (540 aa).

The stretch at 425-453 forms a coiled coil; that stretch reads IEKVEGMIEQQRRLNKDLLDEVAGNQNNI.

Belongs to the BshC family.

Functionally, involved in bacillithiol (BSH) biosynthesis. May catalyze the last step of the pathway, the addition of cysteine to glucosamine malate (GlcN-Mal) to generate BSH. This Staphylococcus aureus (strain NCTC 8325 / PS 47) protein is Putative cysteine ligase BshC.